Consider the following 115-residue polypeptide: Large ribosomal subunit protein bL20 (115 aa).

This sequence belongs to the bacterial ribosomal protein bL20 family.

Functionally, binds directly to 23S ribosomal RNA and is necessary for the in vitro assembly process of the 50S ribosomal subunit. It is not involved in the protein synthesizing functions of that subunit. The protein is Large ribosomal subunit protein bL20 of Chlorobium phaeobacteroides (strain BS1).